The sequence spans 180 residues: Adenine phosphoribosyltransferase (180 aa).

This sequence belongs to the purine/pyrimidine phosphoribosyltransferase family. As to quaternary structure, homodimer.

Its subcellular location is the cytoplasm. It catalyses the reaction AMP + diphosphate = 5-phospho-alpha-D-ribose 1-diphosphate + adenine. It participates in purine metabolism; AMP biosynthesis via salvage pathway; AMP from adenine: step 1/1. Its function is as follows. Catalyzes a salvage reaction resulting in the formation of AMP, that is energically less costly than de novo synthesis. The polypeptide is Adenine phosphoribosyltransferase (Pasteurella multocida (strain Pm70)).